The following is a 101-amino-acid chain: Omega-scoloptoxin(10)-Ssd1b (101 aa).

Residues methionine 1–alanine 23 form the signal peptide.

Post-translationally, contains 3 disulfide bonds. As to expression, expressed by the venom gland.

It is found in the secreted. Functionally, voltage-gated calcium channel inhibitor. The sequence is that of Omega-scoloptoxin(10)-Ssd1b from Scolopendra dehaani (Thai centipede).